Consider the following 181-residue polypeptide: Malignant T-cell-amplified sequence 1-A (181 aa).

The region spanning 92 to 171 (LPHQQVDKGA…IGIENIHYLN (80 aa)) is the PUA domain.

It belongs to the MCTS1 family.

It localises to the cytoplasm. Its function is as follows. Plays a role as translation enhancer and involved in cell cycle regulation. This Xenopus laevis (African clawed frog) protein is Malignant T-cell-amplified sequence 1-A (mcts1-a).